Here is a 2314-residue protein sequence, read N- to C-terminus: A-kinase anchor protein 6 (2314 aa).

Positions 1–12 (MLTMSVTLSPLR) are enriched in polar residues. Disordered regions lie at residues 1–25 (MLTMSVTLSPLRSQGPDPMATDASP), 285–432 (PSSC…DPPD), 505–613 (SLCR…PCHA), and 736–755 (TDEKSERPSSSEKNESHSAT). Residues 301 to 311 (SDDHKGEHGED) show a composition bias toward basic and acidic residues. Polar residues predominate over residues 319-330 (QLDSTVGMSSLD). A compositionally biased stretch (basic and acidic residues) spans 398–420 (ETQKNERKGSDRKGQVVDLKPEL). The span at 569 to 592 (SKASSSPPCSHSSESSLGSDSIKS) shows a compositional bias: low complexity. Positions 736–753 (TDEKSERPSSSEKNESHS) are enriched in basic and acidic residues. 2 Spectrin repeats span residues 768-847 (QHQE…QLLE) and 1033-1148 (ILEK…LLDD). A Phosphoserine modification is found at Ser-1072. The disordered stretch occupies residues 1349–1401 (CHSGDLSQNSGSESGIVSEGDNEMPTNSDMSLFSMVDGSPSNPETEHPDPQMG). Positions 1353–1363 (DLSQNSGSESG) are enriched in polar residues. Ser-1568 and Ser-1593 each carry phosphoserine. 2 stretches are compositionally biased toward basic and acidic residues: residues 1816-1831 (RSGVTDEIKVNKDGGG) and 1874-1891 (GENKKSTYDVSKDPHVAD). Disordered regions lie at residues 1816 to 1838 (RSGVTDEIKVNKDGGGNEKANPS), 1854 to 1926 (LSEN…KTIS), and 1940 to 2012 (SEDS…SGAR). Over residues 1917-1926 (NLASNVKTIS) the composition is skewed to polar residues. A compositionally biased stretch (basic and acidic residues) spans 1944-1958 (SVARKEFCPPNDRHP). The interval 2062-2075 (IIDMASTALKSKSQ) is PKA-RII subunit binding domain. Positions 2166–2286 (EEAGLPGALP…NAKQPKGKVA (121 aa)) are disordered. Residues 2215-2226 (GADDAKEGDDVS) are compositionally biased toward basic and acidic residues. Residues 2227–2243 (HTSQGCAESTEPTTPSG) show a composition bias toward polar residues.

As to quaternary structure, interacts with RII subunit of PKA, phosphatase 2B (calcineurin) and AKAP79. Interacts with SYNPO2.

The protein localises to the sarcoplasmic reticulum. The protein resides in the nucleus membrane. Its function is as follows. Binds to type II regulatory subunits of protein kinase A and anchors/targets them to the nuclear membrane or sarcoplasmic reticulum. May act as an adapter for assembling multiprotein complexes. This is A-kinase anchor protein 6 (Akap6) from Rattus norvegicus (Rat).